A 652-amino-acid polypeptide reads, in one-letter code: DNA ligase (652 aa).

NAD(+)-binding positions include 29–33 (DSDYD), 78–79 (SL), and Glu-107. Lys-109 acts as the N6-AMP-lysine intermediate in catalysis. NAD(+) contacts are provided by Arg-130, Glu-164, Lys-278, and Lys-302. Zn(2+) is bound by residues Cys-395, Cys-398, Cys-413, and Cys-418. Residues 577–652 (NSDAALFGLT…IEDEDWLRQL (76 aa)) form the BRCT domain.

This sequence belongs to the NAD-dependent DNA ligase family. LigA subfamily. The cofactor is Mg(2+). It depends on Mn(2+) as a cofactor.

The catalysed reaction is NAD(+) + (deoxyribonucleotide)n-3'-hydroxyl + 5'-phospho-(deoxyribonucleotide)m = (deoxyribonucleotide)n+m + AMP + beta-nicotinamide D-nucleotide.. Functionally, DNA ligase that catalyzes the formation of phosphodiester linkages between 5'-phosphoryl and 3'-hydroxyl groups in double-stranded DNA using NAD as a coenzyme and as the energy source for the reaction. It is essential for DNA replication and repair of damaged DNA. The polypeptide is DNA ligase (Streptococcus pyogenes serotype M49 (strain NZ131)).